The following is a 729-amino-acid chain: Anti-bacteriophage protein B (729 aa).

Residues 109 to 271 (FDLLKSGQNV…KLGYPHTFVS (163 aa)) form the Helicase ATP-binding domain. 122–129 (APTSMGKS) is an ATP binding site. Residues 297–472 (ALGEIAHACV…GIDTPINLLA (176 aa)) enclose the Helicase C-terminal domain.

It belongs to the helicase family. Interacts with AbpB.

Its function is as follows. Part of an antiviral system composed of AbpA and AbpB; when both are expressed from a plasmid they confer resistance to phages T2, T4, T7 and lambda but not RB32 or RB69. Resistance is temperature dependent, it can be seen at 30 degrees Celsius but not at 37 or 42 degrees Celsius. The system impairs phage but not bacterial DNA synthesis (shown for T4, T7 and lambda). Partially suppressed by mutations in T4 gene 41, a replicative helicase. Functionally, deletion or mutations in this gene were selected in directed evolution experiments for resistance to intense ionizing radiation (3000 Gy). This Escherichia coli (strain K12) protein is Anti-bacteriophage protein B.